Here is a 955-residue protein sequence, read N- to C-terminus: Anion exchange protein 4 (955 aa).

Disordered regions lie at residues V20 to P50, H154 to Q190, and P331 to Q352. The next 4 membrane-spanning stretches (helical) occupy residues A387–G407, G415–G435, V472–V492, and F503–A523. Positions A387–N955 are membrane (anion exchange). N-linked (GlcNAc...) asparagine glycans are attached at residues N548 and N572. The next 7 membrane-spanning stretches (helical) occupy residues V596 to A616, F637 to M657, P684 to M704, L730 to S750, L785 to L804, V811 to M830, and L871 to V891. The tract at residues R918 to N955 is disordered. N951 carries N-linked (GlcNAc...) asparagine glycosylation.

It belongs to the anion exchanger (TC 2.A.31) family. As to expression, highly expressed in kidney. Expressed in the outer medulla and the inner medulla in the kidney cortex. Only expressed in beta-intercalated cells.

Its subcellular location is the lateral cell membrane. The protein resides in the apical cell membrane. It is found in the basolateral cell membrane. The catalysed reaction is 2 hydrogencarbonate(out) + chloride(in) + Na(+)(out) = 2 hydrogencarbonate(in) + chloride(out) + Na(+)(in). The enzyme catalyses K(+)(in) + 2 hydrogencarbonate(in) + chloride(out) = K(+)(out) + 2 hydrogencarbonate(out) + chloride(in). It carries out the reaction Li(+)(in) + 2 hydrogencarbonate(in) + chloride(out) = Li(+)(out) + 2 hydrogencarbonate(out) + chloride(in). It catalyses the reaction Rb(+)(in) + 2 hydrogencarbonate(in) + chloride(out) = Rb(+)(out) + 2 hydrogencarbonate(out) + chloride(in). The catalysed reaction is Cs(+)(in) + 2 hydrogencarbonate(in) + chloride(out) = Cs(+)(out) + 2 hydrogencarbonate(out) + chloride(in). Its function is as follows. Electroneutral Cl(-)/HCO3(-) antiporter that favors chloride ion entry and efflux of hydrogencarbonate and sodium ion across the basolateral membrane and may participat in salivary secretion. Also mediates Cl(-)/HCO3(-) exchange activity in the presence of K(+) as well as Cs(+), Li(+), and Rb(+). Does not contribute to Cl(-)/HCO3(-) exchanger in the apical membrane of the upper villous epithelium. The sequence is that of Anion exchange protein 4 from Oryctolagus cuniculus (Rabbit).